Consider the following 357-residue polypeptide: Peptide chain release factor 1 (357 aa).

N5-methylglutamine is present on Q233.

The protein belongs to the prokaryotic/mitochondrial release factor family. Post-translationally, methylated by PrmC. Methylation increases the termination efficiency of RF1.

The protein localises to the cytoplasm. Its function is as follows. Peptide chain release factor 1 directs the termination of translation in response to the peptide chain termination codons UAG and UAA. The polypeptide is Peptide chain release factor 1 (Syntrophus aciditrophicus (strain SB)).